A 102-amino-acid chain; its full sequence is Small ribosomal subunit protein uS10 (102 aa).

It belongs to the universal ribosomal protein uS10 family. Part of the 30S ribosomal subunit.

Involved in the binding of tRNA to the ribosomes. In Methanospirillum hungatei JF-1 (strain ATCC 27890 / DSM 864 / NBRC 100397 / JF-1), this protein is Small ribosomal subunit protein uS10.